We begin with the raw amino-acid sequence, 213 residues long: Uridine kinase (213 aa).

15–22 is a binding site for ATP; sequence GASASGKS.

The protein belongs to the uridine kinase family.

It localises to the cytoplasm. It carries out the reaction uridine + ATP = UMP + ADP + H(+). The catalysed reaction is cytidine + ATP = CMP + ADP + H(+). Its pathway is pyrimidine metabolism; CTP biosynthesis via salvage pathway; CTP from cytidine: step 1/3. It participates in pyrimidine metabolism; UMP biosynthesis via salvage pathway; UMP from uridine: step 1/1. The chain is Uridine kinase from Escherichia coli O157:H7.